The primary structure comprises 442 residues: C4-dicarboxylate transport protein 2 (442 aa).

Transmembrane regions (helical) follow at residues 20 to 39 (QLYVQVLVAITVGILLGHYY), 52 to 74 (AFIKLVKMIIAPVIFLTVATGIA), 89 to 111 (AMLYFLTFSTLALIIGLVVANVV), 141 to 158 (VTGFLMNIIPGTIVGAFA), 162 to 179 (ILQVLFFSVLFGIALALV), 200 to 221 (LVSVLMKAAPIGAFGAMAFTIG), 231 to 253 (LAMLVGTFYATSLLFVFVVLGAV), 342 to 364 (ILLLLVAMLSSKGAAGITGAGFI), and 368 to 387 (ATLSVVPSVPVAGMALILGV).

This sequence belongs to the dicarboxylate/amino acid:cation symporter (DAACS) (TC 2.A.23) family.

It localises to the cell inner membrane. In terms of biological role, responsible for the transport of dicarboxylates such as succinate, fumarate, and malate from the periplasm across the membrane. This transport system plays an important role in the energy supply of rhizobium-legume symbionts. In Mesorhizobium japonicum (strain LMG 29417 / CECT 9101 / MAFF 303099) (Mesorhizobium loti (strain MAFF 303099)), this protein is C4-dicarboxylate transport protein 2 (dctA2).